The primary structure comprises 142 residues: Alpha-lactalbumin (142 aa).

An N-terminal signal peptide occupies residues 1-18 (MMSFVSLLLVGILFHATQ). In terms of domain architecture, C-type lysozyme spans 20-142 (EQLTKCEVFR…KLDQWLCEKL (123 aa)). Intrachain disulfides connect cysteine 25–cysteine 139, cysteine 47–cysteine 130, cysteine 80–cysteine 96, and cysteine 92–cysteine 110. 2 N-linked (GlcNAc...) asparagine glycosylation sites follow: asparagine 64 and asparagine 93. Residues lysine 98, aspartate 101, aspartate 103, aspartate 106, and aspartate 107 each contribute to the Ca(2+) site.

The protein belongs to the glycosyl hydrolase 22 family. Lactose synthase (LS) is a heterodimer of a catalytic component, beta1,4-galactosyltransferase (beta4Gal-T1) and a regulatory component, alpha-lactalbumin (LA). Mammary gland specific. Secreted in milk.

The protein resides in the secreted. Functionally, regulatory subunit of lactose synthase, changes the substrate specificity of galactosyltransferase in the mammary gland making glucose a good acceptor substrate for this enzyme. This enables LS to synthesize lactose, the major carbohydrate component of milk. In other tissues, galactosyltransferase transfers galactose onto the N-acetylglucosamine of the oligosaccharide chains in glycoproteins. This is Alpha-lactalbumin (LALBA) from Bubalus bubalis (Domestic water buffalo).